Reading from the N-terminus, the 262-residue chain is MEILLVNDDGIYSNGLLALKNVICEEFDANVTVVAPTNQQSGIGRAISLFEPLRITKTKLADCSEGYAVSGTPTDCVVLGVHQVLKKVPDYIISGINIGENLGTEITTSGTLGAAFEGAHHGAKSFACSLQVTTDHLKFKEGESPIEFMTAARIVKNVFKKFLDDEFPCDVVNINVPDNATENTPVEITKLAKRMYSMHVEERIDPRSRSYYWLDGYPVMDEEDGTDVYAVRNKRNVSVTPLTLDNTAKNIDEFKEKYGKKF.

Residues aspartate 8, aspartate 9, serine 41, and asparagine 97 each coordinate a divalent metal cation.

It belongs to the SurE nucleotidase family. The cofactor is a divalent metal cation.

The protein resides in the cytoplasm. The enzyme catalyses a ribonucleoside 5'-phosphate + H2O = a ribonucleoside + phosphate. In terms of biological role, nucleotidase that shows phosphatase activity on nucleoside 5'-monophosphates. This is 5'-nucleotidase SurE from Methanococcus maripaludis (strain DSM 14266 / JCM 13030 / NBRC 101832 / S2 / LL).